The sequence spans 138 residues: Beta-lactamase HcpB (138 aa).

TPR repeat units follow at residues 1 to 28 (MVGGGTVKKDLKKAIQYYVKACELNEMF), 57 to 94 (GNGCRFLGDFYENGKYVKKDLRKAAQYYSKACGLNDQD), and 97 to 130 (LILGYKQYAGKGVVKNEKQAVKTFEKACRLGSED). 4 disulfide bridges follow: Cys-22/Cys-30, Cys-52/Cys-60, Cys-88/Cys-96, and Cys-124/Cys-132.

It belongs to the hcp beta-lactamase family.

The catalysed reaction is a beta-lactam + H2O = a substituted beta-amino acid. Hydrolyzes 6-aminopenicillinic acid and 7-aminocephalosporanic acid (ACA) derivatives. This Helicobacter pylori (strain ATCC 700392 / 26695) (Campylobacter pylori) protein is Beta-lactamase HcpB (hcpB).